The following is a 1249-amino-acid chain: Cilia- and flagella-associated protein 57 (1249 aa).

8 WD repeats span residues 105-148 (FQVQ…AIIK), 195-233 (GESSNYLAHAWVSEDRVIVGTDTGKLFLFESGDQRWETS), 335-374 (SDKQDVLCLCFSPSEETLIASTNKNQLYSITMSLTEISKG), 386-425 (LHSASITGLDTCIRKPLIATCSLDRSVRIWNYESNTLELY), 427-469 (EYQE…KEYS), 471-506 (RGCKECSFSNGGHLFAAVNGNVIHIFTTTSLENINI), 509-548 (GHTGKIRSLVWNLDDSKLVSAGTDGAVYEWNLSTGKRETE), and 635-674 (AHAGPVMKMLLTFDDQFLLTVGEDGCLFTWKVFDKDGRGI). Coiled coils occupy residues 690–1056 (KTDM…KTDL) and 1094–1165 (SDLQ…SALK).

This sequence belongs to the CFAP57 family. As to quaternary structure, may form homodimers. Associates with components of the nexin-dynein regulatory complex (N-DRC) and the CFAP184:CFAP263 complex. As to expression, predominanly expressed in testis, lung and skin. Weak expression in brain and kidney.

The protein localises to the cytoplasm. Its subcellular location is the cytoskeleton. It localises to the cilium axoneme. In terms of biological role, associates with components of the nexin-dynein regulatory complex (N-DRC), a key regulator of ciliary/flagellar motility, and might act as an inner dynein arm (IDA) hub or linkage. This Mus musculus (Mouse) protein is Cilia- and flagella-associated protein 57.